A 737-amino-acid polypeptide reads, in one-letter code: MPDHDSTALLSRQTKRRRVDIGVKRTVGTASAFFAKARATFFSAMNPQGSEQDVEYSVVQHADGEKSNVLRKLLKRANSYEDAMMPFPGATIISQLLKNNMNKNGGTEPSFQASGLSSTGSEVHQEDICSNSSRDSPPECLSPFGRPTMSQFDMDRLCDEHLRAKRARVENIIRGMSHSPSVALRGNENEREMAPQSVSPRESYRENKRKQKLPQQQQQSFQQLVSARKEQKREERRQLKQQLEDMQKQLRQLQEKFYQIYDSTDSENDEDGNLSEDSMRSEILDARAQDSVGRSDNEMCELDPGQFIDRARALIREQEMAENKPKREGNNKERDHGPNSLQPEGKHLAETLKQELNTAMSQVVDTVVKVFSAKPSRQVPQVFPPLQIPQARFAVNGENHNFHTANQRLQCFGDVIIPNPLDTFGNVQMASSTDQTEALPLVVRKNSSDQSASGPAAGGHHQPLHQSPLSATTGFTTSTFRHPFPLPLMAYPFQSPLGAPSGSFSGKDRASPESLDLTRDTTSLRTKMSSHHLSHHPCSPAHPPSTAEGLSLSLIKSECGDLQDMSEISPYSGSAMQEGLSPNHLKKAKLMFFYTRYPSSNMLKTYFSDVKFNRCITSQLIKWFSNFREFYYIQMEKYARQAINDGVTSTEELSITRDCELYRALNMHYNKANDFEVPERFLEVAQITLREFFNAIIAGKDVDPSWKKAIYKVICKLDSEVPEIFKSPNCLQELLHE.

Residues Met1 to Gly28 are interaction with RORG. Residues Lys103–Asp135 are compositionally biased toward polar residues. A disordered region spans residues Lys103–Met149. 3 positions are modified to phosphoserine: Ser177, Ser179, and Ser199. The tract at residues His178–Gln242 is disordered. A compositionally biased stretch (low complexity) spans Leu213–Gln223. Basic and acidic residues predominate over residues Ala227 to Gln242. Ser291 and Ser295 each carry phosphoserine. Positions Met320–Gly337 are enriched in basic and acidic residues. Disordered regions lie at residues Met320–Glu344 and Lys445–Thr476. Lys324 participates in a covalent cross-link: Glycyl lysine isopeptide (Lys-Gly) (interchain with G-Cter in SUMO2). The span at Leu464–Thr476 shows a compositional bias: polar residues. 3 positions are modified to phosphoserine: Ser511, Ser514, and Ser557. In terms of domain architecture, Prospero-type homeo spans Gln577–Met635. The interval Gln577–Leu735 is homeo-Prospero. The Prospero domain occupies Glu636–Leu735. Residues Glu723–Asn729 are essential for nuclear localization, interaction with RORG, repression of RORG transcriptional activator activity.

It belongs to the Prospero homeodomain family. Interacts with RORA and RORG (via AF-2 motif). In terms of tissue distribution, most actively expressed in the developing lens. Detected also in embryonic brain, lung, liver and kidney. In adult, it is more abundant in heart and liver than in brain, skeletal muscle, kidney and pancreas.

Its subcellular location is the nucleus. In terms of biological role, transcription factor involved in developmental processes such as cell fate determination, gene transcriptional regulation and progenitor cell regulation in a number of organs. Plays a critical role in embryonic development and functions as a key regulatory protein in neurogenesis and the development of the heart, eye lens, liver, pancreas and the lymphatic system. Involved in the regulation of the circadian rhythm. Represses: transcription of the retinoid-related orphan receptor RORG, transcriptional activator activity of RORA and RORG and the expression of RORA/G-target genes including core clock components: BMAL1, NPAS2 and CRY1 and metabolic genes: AVPR1A and ELOVL3. This chain is Prospero homeobox protein 1 (PROX1), found in Homo sapiens (Human).